The primary structure comprises 271 residues: Tryptophan synthase alpha chain (271 aa).

Catalysis depends on proton acceptor residues glutamate 51 and aspartate 62.

This sequence belongs to the TrpA family. Tetramer of two alpha and two beta chains.

It carries out the reaction (1S,2R)-1-C-(indol-3-yl)glycerol 3-phosphate + L-serine = D-glyceraldehyde 3-phosphate + L-tryptophan + H2O. Its pathway is amino-acid biosynthesis; L-tryptophan biosynthesis; L-tryptophan from chorismate: step 5/5. In terms of biological role, the alpha subunit is responsible for the aldol cleavage of indoleglycerol phosphate to indole and glyceraldehyde 3-phosphate. In Prochlorococcus marinus (strain NATL2A), this protein is Tryptophan synthase alpha chain.